The primary structure comprises 564 residues: Bicarbonate transporter BicA (564 aa).

Residues 1 to 11 are Cytoplasmic-facing; sequence MQITNKIHFRN. Residues 12–37 form a helical membrane-spanning segment; sequence LQGDLFGGVTAAVIALPMALAFGIAS. The Periplasmic portion of the chain corresponds to 38 to 40; it reads GAG. The helical transmembrane segment at 41–58 threads the bilayer; the sequence is ATAGLWGAVIVGFFAALF. The Cytoplasmic segment spans residues 59–70; the sequence is GGTPTLISEPTG. T69 is a hydrogencarbonate binding site. The helical transmembrane segment at 71–86 threads the bilayer; it reads PMTVVQTAVIASLVAA. The Periplasmic portion of the chain corresponds to 87–90; the sequence is DPDN. A helical membrane pass occupies residues 91-112; the sequence is GLAMAFTVVMMAGLFQIAFGLL. Over 113–122 the chain is Cytoplasmic; it reads KLGKYVTMMP. The helical transmembrane segment at 123-145 threads the bilayer; sequence YTVISGFMSGIGIILVILQLAPF. The Periplasmic portion of the chain corresponds to 146 to 170; sequence LGQASPKGGVIGTLQALPNLVSNVR. The chain crosses the membrane as a helical span at residues 171-185; it reads PVETLLALMTVGIIW. The Cytoplasmic portion of the chain corresponds to 186–196; sequence FMPSRWKKFAP. The helical transmembrane segment at 197–211 threads the bilayer; that stretch reads PQLVALVLGTIISIT. Residues 212 to 240 lie on the Periplasmic side of the membrane; sequence LFGDLDIRRIGEIQAGLPALQLPVFQADQ. Residues 241–269 form a helical membrane-spanning segment; the sequence is LQRMLIDAAVLGMLGCIDALLTSVVADSL. 2 residues coordinate Na(+): D258 and T262. Residues 270–275 are Cytoplasmic-facing; sequence TRTEHN. A helical transmembrane segment spans residues 276–292; it reads SNKELVGQGIGNVMSGL. At 293–302 the chain is on the periplasmic side; it reads FGGLGGAGAT. Position 300 (G300) interacts with Na(+). A301 contributes to the hydrogencarbonate binding site. T302 contacts Na(+). The helical transmembrane segment at 303–312 threads the bilayer; it reads MGTVVNIQSG. Residues 313–315 lie on the Cytoplasmic side of the membrane; it reads GRT. A helical transmembrane segment spans residues 316 to 338; that stretch reads ALSGLIRAMVLLVVILGAAKLAA. The Periplasmic segment spans residues 339–341; it reads TIP. The chain crosses the membrane as a helical span at residues 342 to 357; that stretch reads LAVLAGIAFKVGVDII. Over 358–369 the chain is Cytoplasmic; sequence DWGFLKRAHHVS. A helical transmembrane segment spans residues 370–390; the sequence is IKGALIMYAVIVLTVLVDLIA. Topologically, residues 391–392 are periplasmic; sequence AV. A helical transmembrane segment spans residues 393–405; that stretch reads GIGVFIANILTID. At 406–564 the chain is on the cytoplasmic side; that stretch reads RMSALQSKAV…PSSSSVQTTY (159 aa). One can recognise an STAS domain in the interval 432 to 542; that stretch reads KRWLDEGNGR…DDRSEALKDA (111 aa).

Belongs to the SLC26A/SulP transporter (TC 2.A.53) family. In terms of assembly, forms homodimers through the STAS cytoplasmic domain.

It localises to the cell inner membrane. Functionally, low affinity, high-flux Na(+)-dependent bicarbonate transporter. Involved in carbone dioxide-concentrating mechanisms (CCMs) that accumulate CO(2) and improve photosynthetic carbon fixation. The sequence is that of Bicarbonate transporter BicA from Synechocystis sp. (strain ATCC 27184 / PCC 6803 / Kazusa).